A 128-amino-acid polypeptide reads, in one-letter code: Con-Ins F2 (128 aa).

The N-terminal stretch at 1-24 is a signal peptide; it reads MTTSSYFLLVALGLLLYVCRSSFG. 4 disulfides stabilise this stretch: cysteine 29–cysteine 104, cysteine 41–cysteine 107, cysteine 53–cysteine 120, and cysteine 106–cysteine 111. A propeptide spans 59-89 (c peptide); sequence LQGGTGKKRGRASLLRKRRAFLSMLKARAKR. Glutamate 115 carries the post-translational modification 4-carboxyglutamate; partial. A Serine amide modification is found at serine 127.

This sequence belongs to the insulin family. In terms of assembly, heterodimer of A and B chains; disulfide-linked. In terms of tissue distribution, expressed by the venom gland.

It localises to the secreted. Its function is as follows. This venom insulin facilitates prey capture by rapidly inducing hypoglycemic shock. Intraperitoneal injection of this peptide into zebrafish lowers blood glucose with the same potency than human insulin. In vivo, when applied to water, this peptide reduces overall locomotor activity of zebrafish larvae, observed as a significant decrease in the percentage of time spent swimming and movement frequency. The protein is Con-Ins F2 of Conus floridulus (Cone snail).